Reading from the N-terminus, the 159-residue chain is Type-1 angiotensin II receptor-associated protein (159 aa).

The Extracellular portion of the chain corresponds to 1–23; it reads MELPAVNLKVILLGHWLLTTWGC. Residues 24–44 form a helical membrane-spanning segment; sequence IVFSGSYAWANFTILALGVWA. Residues 45–55 are Cytoplasmic-facing; sequence VAQRDSIDAIS. Residues 56-76 traverse the membrane as a helical segment; it reads MFLGGLLATIFLDIVHISIFY. Topologically, residues 77–86 are extracellular; that stretch reads PRVSLTDTGR. Residues 87-107 form a helical membrane-spanning segment; sequence FGVGMAILSLLLKPLSCCFVY. The Cytoplasmic segment spans residues 108 to 159; that stretch reads HMYRERGGELLVHTGFLGSSQDRSAYQTIDSAEAPADPFAVPEGRSQDARGY. An interaction with AGTR1 region spans residues 110–122; that stretch reads YRERGGELLVHTG. A phosphoserine mark is found at Ser126 and Ser127. Residue Thr135 is modified to Phosphothreonine. Residues Ser138 and Ser153 each carry the phosphoserine modification. The interval 140 to 159 is disordered; that stretch reads EAPADPFAVPEGRSQDARGY.

In terms of assembly, interacts with RACK1, and with the C-terminal region of AGTR1. In terms of tissue distribution, ubiquitous but more abundant in kidney, heart, pancreas and thyroid.

It is found in the endoplasmic reticulum membrane. The protein localises to the golgi apparatus membrane. It localises to the cytoplasmic vesicle membrane. In terms of biological role, appears to be a negative regulator of type-1 angiotensin II receptor-mediated signaling by regulating receptor internalization as well as mechanism of receptor desensitization such as phosphorylation. Also induces a decrease in cell proliferation and angiotensin II-stimulated transcriptional activity. This chain is Type-1 angiotensin II receptor-associated protein (AGTRAP), found in Homo sapiens (Human).